A 147-amino-acid polypeptide reads, in one-letter code: Leghemoglobin 6 (147 aa).

Residues 2–147 (SFTDKQEALV…LATEIKKAMS (146 aa)) enclose the Globin domain. Residues Tyr25 and Tyr30 each carry the nitrated tyrosine modification. Position 45 (Ser45) interacts with heme b. A Phosphoserine modification is found at Ser45. His62 is a binding site for O2. Heme b contacts are provided by Lys65, His94, and Lys97. A Nitrated tyrosine modification is found at Tyr135.

Belongs to the plant globin family. Monomer. In terms of processing, nitrated in effective nodules and particularly in hypoxic conditions; this mechanism may play a protective role in the symbiosis by buffering toxic peroxynitrite NO(2)(-). Nitration level decrease during nodule senescence. Phosphorylation at Ser-45 disrupts the molecular environment of its porphyrin ring oxygen binding pocket, thus leading to a reduced oxygen consumption and to the delivery of oxygen O(2) to symbiosomes. As to expression, root nodules.

It is found in the cytoplasm. The protein localises to the cytosol. Its subcellular location is the nucleus. Leghemoglobin that reversibly binds oxygen O(2) through a pentacoordinated heme iron. In root nodules, facilitates the diffusion of oxygen to the bacteroids while preventing the bacterial nitrogenase from being inactivated by buffering dioxygen, nitric oxide and carbon monoxide, and promoting the formation of reactive oxygen species (ROS, e.g. H(2)O(2)). This role is essential for symbiotic nitrogen fixation (SNF). This chain is Leghemoglobin 6, found in Medicago truncatula (Barrel medic).